The sequence spans 218 residues: DNA-binding protein HU 2 (218 aa).

Residues Met-1–Ser-91 are bacterial histone-like domain. The disordered stretch occupies residues Val-101 to Lys-218. The interval Lys-118–Lys-218 is degenerate repeats region. A compositionally biased stretch (low complexity) spans Lys-127–Thr-161. Over residues Thr-162 to Ala-172 the composition is skewed to basic residues. The segment covering Ala-173–Lys-182 has biased composition (low complexity). Over residues Thr-183–Lys-218 the composition is skewed to basic residues.

It belongs to the bacterial histone-like protein family. Long actinobacterial subfamily. As to quaternary structure, homodimer.

Its subcellular location is the cytoplasm. It localises to the nucleoid. Its function is as follows. Histone-like DNA-binding protein which is capable of wrapping DNA to stabilize it, and thus to prevent its denaturation under extreme environmental conditions. The protein is DNA-binding protein HU 2 (hup2) of Streptomyces coelicolor (strain ATCC BAA-471 / A3(2) / M145).